A 210-amino-acid polypeptide reads, in one-letter code: uncharacterized protein (210 aa).

5 positions are modified to phosphoserine: S18, S39, S41, S57, and S60. Residues 33-46 (LDLDQRSMSPSNIA) are compositionally biased toward polar residues. The disordered stretch occupies residues 33-58 (LDLDQRSMSPSNIASGEDRITRTNSG). Disordered stretches follow at residues 100-139 (YDHNNGTKSPTPKTSNMVDPKNKKKNKKKKNDKDDKYKVS) and 177-210 (DSAPLDNANYPLSDHSPSLNSMDNTTKHSSNVHT). A compositionally biased stretch (polar residues) spans 102-116 (HNNGTKSPTPKTSNM). Basic and acidic residues predominate over residues 130–139 (NDKDDKYKVS). A phosphoserine mark is found at S178, S189, and S192. A compositionally biased stretch (polar residues) spans 191–210 (HSPSLNSMDNTTKHSSNVHT).

This is an uncharacterized protein from Saccharomyces cerevisiae (strain ATCC 204508 / S288c) (Baker's yeast).